Here is a 514-residue protein sequence, read N- to C-terminus: Peptide chain release factor 3 (514 aa).

Positions 8–268 (KKRRTFAIIS…TFLEFAPEPH (261 aa)) constitute a tr-type G domain. GTP contacts are provided by residues 17–24 (SHPDAGKT), 85–89 (DTPGH), and 139–142 (NKLD).

It belongs to the TRAFAC class translation factor GTPase superfamily. Classic translation factor GTPase family. PrfC subfamily.

The protein resides in the cytoplasm. Its function is as follows. Increases the formation of ribosomal termination complexes and stimulates activities of RF-1 and RF-2. It binds guanine nucleotides and has strong preference for UGA stop codons. It may interact directly with the ribosome. The stimulation of RF-1 and RF-2 is significantly reduced by GTP and GDP, but not by GMP. The sequence is that of Peptide chain release factor 3 from Streptococcus pyogenes serotype M1.